The chain runs to 156 residues: Ribosomal RNA large subunit methyltransferase H (156 aa).

Residues Leu-73, Gly-104, and 123 to 128 (ISSMTL) each bind S-adenosyl-L-methionine.

It belongs to the RNA methyltransferase RlmH family. In terms of assembly, homodimer.

The protein resides in the cytoplasm. It catalyses the reaction pseudouridine(1915) in 23S rRNA + S-adenosyl-L-methionine = N(3)-methylpseudouridine(1915) in 23S rRNA + S-adenosyl-L-homocysteine + H(+). Specifically methylates the pseudouridine at position 1915 (m3Psi1915) in 23S rRNA. The protein is Ribosomal RNA large subunit methyltransferase H of Burkholderia lata (strain ATCC 17760 / DSM 23089 / LMG 22485 / NCIMB 9086 / R18194 / 383).